Here is a 206-residue protein sequence, read N- to C-terminus: Small ribosomal subunit protein uS4 (206 aa).

The region spanning 94-157 (RRLDNVVYRL…RSRTYFKNLV (64 aa)) is the S4 RNA-binding domain.

This sequence belongs to the universal ribosomal protein uS4 family. In terms of assembly, part of the 30S ribosomal subunit. Contacts protein S5. The interaction surface between S4 and S5 is involved in control of translational fidelity.

In terms of biological role, one of the primary rRNA binding proteins, it binds directly to 16S rRNA where it nucleates assembly of the body of the 30S subunit. With S5 and S12 plays an important role in translational accuracy. This Chloroflexus aurantiacus (strain ATCC 29364 / DSM 637 / Y-400-fl) protein is Small ribosomal subunit protein uS4.